Here is a 292-residue protein sequence, read N- to C-terminus: Tricin synthase 2 (292 aa).

Positions Arg21–Gly46 are disordered. The span at Thr23–Ala32 shows a compositional bias: polar residues. Residues Ser108, Glu130, Gly132 to Val133, Ser138, Asp156, and Ala185 each bind S-adenosyl-L-methionine. Asp208 contributes to the a divalent metal cation binding site. Asp210 lines the S-adenosyl-L-methionine pocket. Asp234 and Asn235 together coordinate a divalent metal cation.

The protein belongs to the class I-like SAM-binding methyltransferase superfamily. Cation-dependent O-methyltransferase family. CCoAMT subfamily. It depends on Mg(2+) as a cofactor. The cofactor is Mn(2+). In terms of tissue distribution, expressed in stems only.

It catalyses the reaction tricetin + 2 S-adenosyl-L-methionine = 3',5'-di-O-methyltricetin + 2 S-adenosyl-L-homocysteine + 2 H(+). Functionally, catalyzes the stepwise methylation of tricetin to its 3'-mono- and 3',5'-dimethyl ethers. No 3',4',5'-trimethylated ester derivatives are produced. Can use caffeoyl CoA, 5-hydroxyferulic acid, luteolin, tricetin, quercetin, myrcetin and 7,8-dihydroxyflavone as substrates, but not naringenin, apigenin or kaempferol. The 2,3-double bond and the O-dihydroxyl group of the substrate are both required for catalytic activity of the enzyme. This Oryza sativa subsp. japonica (Rice) protein is Tricin synthase 2 (ROMT-17).